The chain runs to 251 residues: Pyruvate formate-lyase-activating enzyme (251 aa).

Positions 15–244 (VDGPGLRYIL…KEAYRYVNFN (230 aa)) constitute a Radical SAM core domain. Residues cysteine 29, cysteine 33, and cysteine 36 each coordinate [4Fe-4S] cluster. S-adenosyl-L-methionine-binding positions include 35 to 37 (YCH), glycine 79, 134 to 136 (DIK), and histidine 207.

It belongs to the organic radical-activating enzymes family. [4Fe-4S] cluster is required as a cofactor.

The protein localises to the cytoplasm. It catalyses the reaction glycyl-[formate C-acetyltransferase] + reduced [flavodoxin] + S-adenosyl-L-methionine = glycin-2-yl radical-[formate C-acetyltransferase] + semiquinone [flavodoxin] + 5'-deoxyadenosine + L-methionine + H(+). Its function is as follows. Activation of pyruvate formate-lyase under anaerobic conditions by generation of an organic free radical, using S-adenosylmethionine and reduced flavodoxin as cosubstrates to produce 5'-deoxy-adenosine. This chain is Pyruvate formate-lyase-activating enzyme (pflA), found in Staphylococcus epidermidis (strain ATCC 12228 / FDA PCI 1200).